The sequence spans 558 residues: MANQGMGPIMVLNSKTQRSTGRQAQLGNIQAARAVADIIRSTLGPRSMLKMLLDPMGGIVITNDGNCILREVDVSHPTAKSMIELSRAHDEEVGDGTTSVIILAGEMLINAEPFVRTNIHPTIIVRGYNYALQEALTICEEWALVVDVHDSERVKSLVQSCIGAKFSSRWNDIMIDMALKAVLTVSRESRTPSFTPEANDVYAQKMEVDIKRYAKVEKIPGGEISDCAVLSGVMFNKDVTHSKMRRRIENPRILLLDTPLEYKKGESQTNVEITDEEDWNTLLKMEEEYVENMCMEIIAFKPDIVITEKGVSDLAQHYFAKANITAFRRLRKTDNNRVARATGATIVSRTDEIRESDIGTGCGLFEMRKIGEEYFAFFEECKDPKACTIILRGGSKDVLNEIERNLTDAMQVVRNVVFDPRLLPGGGATEMAVSVGLRKAGLKLEGIQQGPFLAVGDAMEVIPRTLAQNCGVSVIRTVTQLRAKHAAAYEDSETSGNGTFPKCNWGIDGTTGKLVDMEEFGVWEPFSVKVQTIKTAVESACMILRIDDIVSGSKKKGY.

Cysteine 381 and cysteine 387 form a disulfide bridge.

The protein belongs to the TCP-1 chaperonin family. As to quaternary structure, heterooligomeric complex of about 850 to 900 kDa that forms two stacked rings, 12 to 16 nm in diameter.

The protein localises to the cytoplasm. Functionally, molecular chaperone; assists the folding of proteins upon ATP hydrolysis. Known to play a role, in vitro, in the folding of actin and tubulin. In Thalassiosira weissflogii (Marine diatom), this protein is T-complex protein 1 subunit gamma.